Consider the following 449-residue polypeptide: UDP-glycosyltransferase 74F2 (449 aa).

Residues S273, 325–327, 342–350, and 364–367 each bind UDP-alpha-D-glucose; these read SPQ, HCGWNSTME, and WTDQ.

It belongs to the UDP-glycosyltransferase family. In terms of tissue distribution, expressed in seedlings.

Glycosyltransferase that glucosylates benzoic acid and derivatives. Substrate preference is benzoic acid &gt; salicylic acid (SA) &gt; 3-hydroxybenzoic acid &gt; 4-hydroxybenzoic acid. Catalyzes the formation of both SA 2-O-beta-D-glucoside (SAG) and SA glucose ester (SGE). Has high affinity for the tryptophan precursor anthranilate. Catalyzes the formation of anthranilate glucose ester. Is the major source of this activity in the plant. The protein is UDP-glycosyltransferase 74F2 (UGT74F2) of Arabidopsis thaliana (Mouse-ear cress).